An 86-amino-acid polypeptide reads, in one-letter code: Anti-adapter protein IraP (86 aa).

Positions 1 to 36 (MKNLIAELLLKLAQKEEESKELCAQVEALEIIVTAM) form a coiled coil.

Belongs to the IraP family. Interacts with RssB.

It is found in the cytoplasm. In terms of biological role, inhibits RpoS proteolysis by regulating RssB activity, thereby increasing the stability of the sigma stress factor RpoS especially during phosphate starvation, but also in stationary phase and during nitrogen starvation. Its effect on RpoS stability is due to its interaction with RssB, which probably blocks the interaction of RssB with RpoS, and the consequent delivery of the RssB-RpoS complex to the ClpXP protein degradation pathway. The polypeptide is Anti-adapter protein IraP (Shigella boydii serotype 4 (strain Sb227)).